Reading from the N-terminus, the 317-residue chain is Membrane-associated protein VIPP1, chloroplastic (317 aa).

Residues 92 to 246 are a coiled coil; the sequence is EMNDDLTKMR…SQAEALGQLA (155 aa). Residues 265 to 317 form a disordered region; it reads DLAQMKKEISGSSSKGELPPGRTAVSNSGAARPFRDIEIENELNELRKKANEY. Positions 297 to 317 are enriched in basic and acidic residues; it reads PFRDIEIENELNELRKKANEY.

Belongs to the PspA/Vipp/IM30 family. As to quaternary structure, homomultimer. Complex formation involves interaction via the central alpha-helical domain (71-286). In terms of assembly, (Microbial infection) Interacts with the rice tungro bacilliform virus (RTBV) capsid protein.

Its subcellular location is the plastid. The protein resides in the chloroplast inner membrane. The protein localises to the chloroplast thylakoid membrane. Required for plastid vesicle formation and thylakoid membrane biogenesis, but not for functional assembly of thylakoid protein complexes. The chain is Membrane-associated protein VIPP1, chloroplastic from Oryza sativa subsp. japonica (Rice).